We begin with the raw amino-acid sequence, 178 residues long: Dual-action ribosomal maturation protein DarP (178 aa).

The protein belongs to the DarP family.

The protein resides in the cytoplasm. Its function is as follows. Member of a network of 50S ribosomal subunit biogenesis factors which assembles along the 30S-50S interface, preventing incorrect 23S rRNA structures from forming. Promotes peptidyl transferase center (PTC) maturation. The chain is Dual-action ribosomal maturation protein DarP from Haemophilus influenzae (strain 86-028NP).